The primary structure comprises 413 residues: Probable short/branched chain specific acyl-CoA dehydrogenase (413 aa).

FAD is bound by residues phenylalanine 152–serine 161 and tryptophan 186–threonine 188. Serine 161 contacts substrate. Substrate contacts are provided by residues tyrosine 208, tyrosine 262, and asparagine 270–arginine 273. FAD-binding positions include arginine 298, glutamine 309, and serine 366–glycine 370. Residue glutamate 393 is the Proton acceptor of the active site. Position 395–397 (threonine 395–asparagine 397) interacts with FAD.

Belongs to the acyl-CoA dehydrogenase family. In terms of assembly, homotetramer. It depends on FAD as a cofactor.

It catalyses the reaction 2-methylbutanoyl-CoA + oxidized [electron-transfer flavoprotein] + H(+) = (2E)-2-methylbut-2-enoyl-CoA + reduced [electron-transfer flavoprotein]. The protein operates within lipid metabolism; mitochondrial fatty acid beta-oxidation. It functions in the pathway amino-acid degradation; L-isoleucine degradation. Functionally, probable short and branched chain specific acyl-CoA dehydrogenase that catalyzes the removal of one hydrogen from C-2 and C-3 of the fatty acyl-CoA thioester, resulting in the formation of trans-2-enoyl-CoA. In Dictyostelium discoideum (Social amoeba), this protein is Probable short/branched chain specific acyl-CoA dehydrogenase (acadsb).